The chain runs to 122 residues: MRHRNGNRKLNRTSSHRAAMLRNMANSLLTHETIVTTLPKAKELRRVVEPLITLGKKPSLANRRLAFDRTRDRDVVVKLFGDLGPRFTARNGGYVRVLKYGFRKGDNAPLALVELVDKPAAE.

Belongs to the bacterial ribosomal protein bL17 family. In terms of assembly, part of the 50S ribosomal subunit. Contacts protein L32.

This chain is Large ribosomal subunit protein bL17, found in Neisseria meningitidis serogroup C / serotype 2a (strain ATCC 700532 / DSM 15464 / FAM18).